Consider the following 236-residue polypeptide: Orotidine 5'-phosphate decarboxylase (236 aa).

Substrate contacts are provided by residues aspartate 12, lysine 34, 60 to 69, threonine 123, arginine 184, glutamine 193, glycine 213, and arginine 214; that span reads DLKLHDIPHT. The active-site Proton donor is the lysine 62.

It belongs to the OMP decarboxylase family. Type 1 subfamily. As to quaternary structure, homodimer.

It carries out the reaction orotidine 5'-phosphate + H(+) = UMP + CO2. It functions in the pathway pyrimidine metabolism; UMP biosynthesis via de novo pathway; UMP from orotate: step 2/2. Catalyzes the decarboxylation of orotidine 5'-monophosphate (OMP) to uridine 5'-monophosphate (UMP). The polypeptide is Orotidine 5'-phosphate decarboxylase (Gluconobacter oxydans (strain 621H) (Gluconobacter suboxydans)).